Here is a 150-residue protein sequence, read N- to C-terminus: Endoribonuclease YbeY (150 aa).

Positions 112, 116, and 122 each coordinate Zn(2+).

This sequence belongs to the endoribonuclease YbeY family. The cofactor is Zn(2+).

It localises to the cytoplasm. Its function is as follows. Single strand-specific metallo-endoribonuclease involved in late-stage 70S ribosome quality control and in maturation of the 3' terminus of the 16S rRNA. The chain is Endoribonuclease YbeY from Bdellovibrio bacteriovorus (strain ATCC 15356 / DSM 50701 / NCIMB 9529 / HD100).